The primary structure comprises 172 residues: Mesogenin-1 (172 aa).

Residues Met-1–Gln-69 are disordered. A compositionally biased stretch (polar residues) spans Ser-18–Ala-29. The span at Ser-42–Ser-66 shows a compositional bias: low complexity. The bHLH domain occupies Gln-108–Leu-162.

It is found in the nucleus. In terms of biological role, involved in specifying the paraxial, but not dorsal, mesoderm. May regulate the expression of T-box transcription factors required for mesoderm formation and differentiation, such as brachyury T, wnt8, vegt and eomes. This is Mesogenin-1 (msgn1) from Xenopus tropicalis (Western clawed frog).